A 285-amino-acid chain; its full sequence is K88 fimbrial protein AB (285 aa).

Residues 1–21 (MKKTLIALAIAASAASGMAHA) form the signal peptide.

This sequence belongs to the fimbrial K88 protein family. As to quaternary structure, K88 fimbria, 0.1-1 micrometer in length and 7 nanometers in diameter, is composed of about 100 identical subunits.

It localises to the fimbrium. Its function is as follows. K88 major fimbrial subunit. Fimbriae (also called pili), are polar filaments radiating from the surface of the bacterium to a length of 0.5-1.5 micrometers and numbering 100-300 per cell. They enable bacteria to colonize the epithelium of specific host organs. The protein is K88 fimbrial protein AB (faeG) of Escherichia coli.